The primary structure comprises 248 residues: Coenzyme F420:L-glutamate ligase (248 aa).

GTP contacts are provided by residues Ile15–Ile18, Glu45–Thr46, and Lys50. Asp115 is a binding site for a divalent metal cation. Asn118 contributes to the GTP binding site. A divalent metal cation contacts are provided by Asp155, Ser156, and Gln213. Met211–Ile218 is a GTP binding site.

The protein belongs to the CofE family. As to quaternary structure, homodimer. Requires Mg(2+) as cofactor. It depends on Mn(2+) as a cofactor. K(+) serves as cofactor.

It catalyses the reaction oxidized coenzyme F420-0 + GTP + L-glutamate = oxidized coenzyme F420-1 + GDP + phosphate + H(+). The enzyme catalyses oxidized coenzyme F420-1 + GTP + L-glutamate = oxidized coenzyme F420-2 + GDP + phosphate + H(+). The protein operates within cofactor biosynthesis; coenzyme F420 biosynthesis. In terms of biological role, catalyzes the GTP-dependent successive addition of two or more gamma-linked L-glutamates to the L-lactyl phosphodiester of 7,8-didemethyl-8-hydroxy-5-deazariboflavin (F420-0) to form coenzyme F420-0-glutamyl-glutamate (F420-2) or polyglutamated F420 derivatives. The sequence is that of Coenzyme F420:L-glutamate ligase from Methanococcus maripaludis (strain C6 / ATCC BAA-1332).